Reading from the N-terminus, the 383-residue chain is Succinyl-diaminopimelate desuccinylase (383 aa).

His-73 contacts Zn(2+). The active site involves Asp-75. Zn(2+) is bound at residue Asp-107. Residue Glu-141 is the Proton acceptor of the active site. The Zn(2+) site is built by Glu-142, Glu-170, and His-356.

This sequence belongs to the peptidase M20A family. DapE subfamily. In terms of assembly, homodimer. Requires Zn(2+) as cofactor. Co(2+) is required as a cofactor.

The catalysed reaction is N-succinyl-(2S,6S)-2,6-diaminopimelate + H2O = (2S,6S)-2,6-diaminopimelate + succinate. The protein operates within amino-acid biosynthesis; L-lysine biosynthesis via DAP pathway; LL-2,6-diaminopimelate from (S)-tetrahydrodipicolinate (succinylase route): step 3/3. Catalyzes the hydrolysis of N-succinyl-L,L-diaminopimelic acid (SDAP), forming succinate and LL-2,6-diaminopimelate (DAP), an intermediate involved in the bacterial biosynthesis of lysine and meso-diaminopimelic acid, an essential component of bacterial cell walls. The protein is Succinyl-diaminopimelate desuccinylase of Pseudomonas syringae pv. tomato (strain ATCC BAA-871 / DC3000).